The following is a 412-amino-acid chain: Tyrosine--tRNA ligase 1 (412 aa).

L-tyrosine is bound at residue tyrosine 41. Positions 46 to 55 match the 'HIGH' region motif; it reads ATADSLHVGH. L-tyrosine-binding residues include tyrosine 174 and glutamine 178. The 'KMSKS' region motif lies at 234-238; it reads KMGKS. Residue lysine 237 participates in ATP binding. In terms of domain architecture, S4 RNA-binding spans 348 to 411; sequence LSLTDLLLEH…KKQHLHLRLE (64 aa).

The protein belongs to the class-I aminoacyl-tRNA synthetase family. TyrS type 1 subfamily. As to quaternary structure, homodimer.

The protein localises to the cytoplasm. It carries out the reaction tRNA(Tyr) + L-tyrosine + ATP = L-tyrosyl-tRNA(Tyr) + AMP + diphosphate + H(+). Catalyzes the attachment of tyrosine to tRNA(Tyr) in a two-step reaction: tyrosine is first activated by ATP to form Tyr-AMP and then transferred to the acceptor end of tRNA(Tyr). This Pseudomonas aeruginosa (strain ATCC 15692 / DSM 22644 / CIP 104116 / JCM 14847 / LMG 12228 / 1C / PRS 101 / PAO1) protein is Tyrosine--tRNA ligase 1.